Consider the following 309-residue polypeptide: HPr kinase/phosphorylase (309 aa).

Residues H139 and K160 contribute to the active site. Residue 154-161 (GESGIGKS) participates in ATP binding. Mg(2+) is bound at residue S161. Residue D178 is the Proton acceptor; for phosphorylation activity. Proton donor; for dephosphorylation activity of the active site. Positions 202–211 (IELRGIGIID) are important for the catalytic mechanism of both phosphorylation and dephosphorylation. E203 is a Mg(2+) binding site. R244 is a catalytic residue. The important for the catalytic mechanism of dephosphorylation stretch occupies residues 265–270 (PIRPGR).

This sequence belongs to the HPrK/P family. Homohexamer. It depends on Mg(2+) as a cofactor.

It catalyses the reaction [HPr protein]-L-serine + ATP = [HPr protein]-O-phospho-L-serine + ADP + H(+). It carries out the reaction [HPr protein]-O-phospho-L-serine + phosphate + H(+) = [HPr protein]-L-serine + diphosphate. In terms of biological role, catalyzes the ATP- as well as the pyrophosphate-dependent phosphorylation of a specific serine residue in HPr, a phosphocarrier protein of the phosphoenolpyruvate-dependent sugar phosphotransferase system (PTS). HprK/P also catalyzes the pyrophosphate-producing, inorganic phosphate-dependent dephosphorylation (phosphorolysis) of seryl-phosphorylated HPr (P-Ser-HPr). The two antagonistic activities of HprK/P are regulated by several intracellular metabolites, which change their concentration in response to the absence or presence of rapidly metabolisable carbon sources (glucose, fructose, etc.) in the growth medium. Therefore, by controlling the phosphorylation state of HPr, HPrK/P is a sensor enzyme that plays a major role in the regulation of carbon metabolism and sugar transport: it mediates carbon catabolite repression (CCR), and regulates PTS-catalyzed carbohydrate uptake and inducer exclusion. The polypeptide is HPr kinase/phosphorylase (Lachnoclostridium phytofermentans (strain ATCC 700394 / DSM 18823 / ISDg) (Clostridium phytofermentans)).